Here is a 1431-residue protein sequence, read N- to C-terminus: Caskin-1 (1431 aa).

6 ANK repeats span residues 48 to 77 (DGFSALHHAALNGNTELISLLLEAQAAVDI), 81 to 110 (KGMRPLHYAAWQGRKEPMKLVLKAGSAVNV), 114 to 143 (EGHIPLHLAAQHGHYDVSEMLLQHQSNPCM), 147 to 176 (SGKTPLDLACEFGRVGVVQLLLSSNMCAAL), 188 to 217 (NGTSPLHLAAKNGHIDIIRLLLQAGIDINR), and 220 to 249 (KSGTALHEAALCGKTEVVRLLLDSGINAQV). At Tyr253 the chain carries Phosphotyrosine. One can recognise an SH3 domain in the interval 281-347 (SAALQVRATK…PSSLGEAIVK (67 aa)). Residues 348 to 372 (RAGSRTGSEPSPPQGGGSLGPSAPP) form a disordered region. Residue Ser358 is modified to Phosphoserine. The interval 375-471 (IWVLRKPFAG…PKKLESASAS (97 aa)) is CASK-binding. Arg398 carries the post-translational modification Omega-N-methylarginine. The span at 420–430 (SQKSVSESSPG) shows a compositional bias: polar residues. A disordered region spans residues 420 to 471 (SQKSVSESSPGDSPVKPPEGSSGAARSQPPAAHAGQVYGEQPPKKLESASAS). Ser423 and Ser432 each carry phosphoserine. SAM domains lie at 476 to 539 (KSAE…LNIP) and 545 to 609 (HKPA…LAEL). Phosphoserine is present on residues Ser637 and Ser650. Residues 669–679 (LSGPAEAGAAA) show a composition bias toward low complexity. Disordered stretches follow at residues 669–1000 (LSGP…TGSA) and 1016–1041 (GGGGRAIRRPPEGHPTPRPASPEPGR). Residues 692-712 (RTTSRESSLSGRARHISSSQE) show a composition bias toward polar residues. 2 positions are modified to phosphoserine: Ser723 and Ser728. The residue at position 741 (Thr741) is a Phosphothreonine. Position 791 is a phosphoserine (Ser791). The segment covering 848-860 (PPAPGPAPPPVPA) has biased composition (pro residues). Ser891, Ser893, and Ser989 each carry phosphoserine. Pro residues predominate over residues 1028 to 1037 (GHPTPRPASP). Position 1067 is a phosphothreonine (Thr1067). Ser1069 is subject to Phosphoserine. Disordered regions lie at residues 1072–1372 (VTGL…RQKL) and 1389–1410 (KIRQEDGQGPRPSSIEEKSTGS). The segment covering 1148–1160 (DTVKRRPKAKEPD) has biased composition (basic and acidic residues). Residues 1191–1215 (PELPPPPPPAEPPPADLMQLPPLPL) are compositionally biased toward pro residues. A compositionally biased stretch (polar residues) spans 1236–1247 (QPVSKIQGSPTP). Residue Ser1259 is modified to Phosphoserine. Thr1268 bears the Phosphothreonine mark. Residues 1268-1283 (TPPPVSPKPPPPPTAP) are compositionally biased toward pro residues. Composition is skewed to low complexity over residues 1284–1299 (KPAKALAGLQSSSATP), 1309–1327 (PPAALIKPASSPPSQSASP), and 1345–1359 (PRAAASVVSGPPVAS). Phosphoserine is present on Ser1363. The span at 1389–1407 (KIRQEDGQGPRPSSIEEKS) shows a compositional bias: basic and acidic residues.

Binds the CaM kinase domain of CASK. Forms a ternary complex with CASK and LIN7A, LIN7B or LIN7C. Competes with APBA1 that forms a similar complex with CASK and LIN7 proteins. The tripartite complex CASKIN1/CASK/LIN7(A/B/C) binds the cytoplasmic tail of NRXN1. Polymerizes, via the tandem SAM domains, to form long, 8 nM wide fibers, upon which other proteins can assemble.

The protein resides in the cytoplasm. In terms of biological role, may link the scaffolding protein CASK to downstream intracellular effectors. The protein is Caskin-1 (Caskin1) of Mus musculus (Mouse).